A 182-amino-acid polypeptide reads, in one-letter code: MIRQRRRALTPEQQQEMGQQAATRMMTYPPVVMAHTVAVFLSFDGELDTQPLIEQLWRAGKRVYLPVLHPFSAGNLLFLNYHPQSELVMNRLKIHEPKLDVRDVLPLSRLDVLITPLVAFDEYGQRLGMGGGFYDRTLQNWQHYKTQPVGYAHDCQLVEKLPVEEWDIPLPAVVTPSKVWEW.

A disordered region spans residues 1–21; the sequence is MIRQRRRALTPEQQQEMGQQA. Residues 11 to 21 show a composition bias toward polar residues; it reads PEQQQEMGQQA. Residues 128 to 135 and Asp-167 contribute to the ATP site; that span reads GMGGGFYD.

It belongs to the 5-formyltetrahydrofolate cyclo-ligase family.

The enzyme catalyses (6S)-5-formyl-5,6,7,8-tetrahydrofolate + ATP = (6R)-5,10-methenyltetrahydrofolate + ADP + phosphate. Its pathway is one-carbon metabolism; tetrahydrofolate interconversion. In terms of biological role, involved in the removal of 5-formyltetrahydrofolate. In vitro, it is a potent inhibitor of various folate-dependent enzymes in the C1 metabolism network and in vivo it might function as a folate storage. 5-formyltetrahydrofolate is also used as an antifolate rescue agent in cancer chemotherapy. Catalyzes the irreversible ATP-dependent transformation of 5-formyltetrahydrofolate (5-CHO-THF) to form 5,10-methenyltetrahydrofolate (5,10-CH=THF). The reverse reaction is catalyzed by the serine hydroxymethyltransferase GlyA (SHMT). The sequence is that of 5-formyltetrahydrofolate cyclo-ligase (ygfA) from Escherichia coli O157:H7.